The following is a 472-amino-acid chain: Methylenetetrahydrofolate--tRNA-(uracil-5-)-methyltransferase TrmFO (472 aa).

Gly15–Gly20 contributes to the FAD binding site.

The protein belongs to the MnmG family. TrmFO subfamily. It depends on FAD as a cofactor.

The protein resides in the cytoplasm. It carries out the reaction uridine(54) in tRNA + (6R)-5,10-methylene-5,6,7,8-tetrahydrofolate + NADH + H(+) = 5-methyluridine(54) in tRNA + (6S)-5,6,7,8-tetrahydrofolate + NAD(+). The enzyme catalyses uridine(54) in tRNA + (6R)-5,10-methylene-5,6,7,8-tetrahydrofolate + NADPH + H(+) = 5-methyluridine(54) in tRNA + (6S)-5,6,7,8-tetrahydrofolate + NADP(+). Its function is as follows. Catalyzes the folate-dependent formation of 5-methyl-uridine at position 54 (M-5-U54) in all tRNAs. The protein is Methylenetetrahydrofolate--tRNA-(uracil-5-)-methyltransferase TrmFO of Rhizobium meliloti (strain 1021) (Ensifer meliloti).